Consider the following 68-residue polypeptide: Acylphosphatase (68 aa).

Positions 3 to 68 (RIACTVHGRV…RCTAGLPSAP (66 aa)) constitute an Acylphosphatase-like domain. Catalysis depends on residues arginine 18 and asparagine 36.

It belongs to the acylphosphatase family.

It catalyses the reaction an acyl phosphate + H2O = a carboxylate + phosphate + H(+). The protein is Acylphosphatase (acyP) of Oleidesulfovibrio alaskensis (strain ATCC BAA-1058 / DSM 17464 / G20) (Desulfovibrio alaskensis).